The following is a 75-amino-acid chain: UPF0270 protein Pfl01_4103 (75 aa).

It belongs to the UPF0270 family.

The chain is UPF0270 protein Pfl01_4103 from Pseudomonas fluorescens (strain Pf0-1).